The sequence spans 520 residues: Probable methylmalonate-semialdehyde/malonate-semialdehyde dehydrogenase [acylating], mitochondrial (520 aa).

Positions 169, 171, 195, 198, 199, and 248 each coordinate NAD(+). The active-site Nucleophile is the C303. E403 is an NAD(+) binding site.

Belongs to the aldehyde dehydrogenase family. As to quaternary structure, homotetramer.

The protein localises to the mitochondrion. It carries out the reaction 2-methyl-3-oxopropanoate + NAD(+) + CoA + H2O = propanoyl-CoA + hydrogencarbonate + NADH + H(+). It catalyses the reaction 3-oxopropanoate + NAD(+) + CoA + H2O = hydrogencarbonate + acetyl-CoA + NADH + H(+). Its function is as follows. Probable malonate and methylmalonate semialdehyde dehydrogenase involved in the catabolism of valine, thymine, and compounds catabolized by way of beta-alanine, including uracil and cytidine. This Drosophila pseudoobscura pseudoobscura (Fruit fly) protein is Probable methylmalonate-semialdehyde/malonate-semialdehyde dehydrogenase [acylating], mitochondrial.